A 331-amino-acid chain; its full sequence is Serine racemase (331 aa).

Positions 34 and 54 each coordinate ATP. The active-site Proton acceptor is Lys59. Lys59 carries the N6-(pyridoxal phosphate)lysine modification. Thr81 is a binding site for Ca(2+). Ser84 serves as the catalytic Proton acceptor. Asn86 contacts pyridoxal 5'-phosphate. ATP is bound at residue Tyr121. Asp178 contributes to the Mg(2+) binding site. Residues Gly186, Gly187, and Gly188 each coordinate pyridoxal 5'-phosphate. 3 residues coordinate Ca(2+): Glu210, Ala214, and Asp216. Residues Glu210, Ala214, and Asp216 each coordinate Mg(2+). Positions 210, 214, and 216 each coordinate Mn(2+). Residue Lys278 participates in ATP binding. A pyridoxal 5'-phosphate-binding site is contributed by Ser314. Asn317 is an ATP binding site.

It belongs to the serine/threonine dehydratase family. In terms of assembly, homodimer. The cofactor is Mg(2+). Requires Mn(2+) as cofactor. Ca(2+) is required as a cofactor. It depends on pyridoxal 5'-phosphate as a cofactor. Expressed in the whole plant.

It carries out the reaction L-serine = D-serine. It catalyses the reaction L-serine = pyruvate + NH4(+). The enzyme catalyses D-serine = pyruvate + NH4(+). Its activity is regulated as follows. Inhibited by hydroxylamine. Racemase activity is enhanced by Ca(2+), Mg(2+), Mn(2+), and is decreased by Ni(2+), Zn(2+). Hydratase activity is enhanced by Ca(2+), Mg(2+), Mn(2+), Cu(2+), Fe(2+), Ni(2+). Its function is as follows. Catalyzes the synthesis of D-serine from L-serine. Has dehydratase activity towards both L-serine and D-serine. Displays high substrate specificity for L-serine, whereas L-alanine, L-arginine, and L-glutamine were poor substrates. This chain is Serine racemase (SR), found in Arabidopsis thaliana (Mouse-ear cress).